A 261-amino-acid chain; its full sequence is Cytochrome c oxidase subunit 3 (261 aa).

At 1–15 (MAHQAHAYHMVDPSP) the chain is on the mitochondrial matrix side. Residues 16–34 (WPLTGAVAALLMTSGLAVW) traverse the membrane as a helical segment. Over 35–40 (FHFHSM) the chain is Mitochondrial intermembrane. The chain crosses the membrane as a helical span at residues 41 to 66 (YLLYLGLTLLLLTMVQWWRDIIREGT). Residues 67–72 (FQGHHT) lie on the Mitochondrial matrix side of the membrane. The helical transmembrane segment at 73–105 (PPVQKGLRYGMILFITSEVFFFLGFFWAFYHSS) threads the bilayer. Residues 106 to 128 (LAPTPELGGCWPPTGIYPLDPFE) lie on the Mitochondrial intermembrane side of the membrane. The chain crosses the membrane as a helical span at residues 129–152 (VPLLNTAVLLASGVTVTWAHHSLM). At 153–155 (EGN) the chain is on the mitochondrial matrix side. The helical transmembrane segment at 156–183 (RKEAIQALTLTVLLGFYFTALQAMEYYE) threads the bilayer. At 184 to 190 (APFTIAD) the chain is on the mitochondrial intermembrane side. A helical membrane pass occupies residues 191–223 (GVYGSTFFVATGFHGLHVIIGSTFLMVCLLRQI). The Mitochondrial matrix segment spans residues 224-232 (QYHFTSEHH). The helical transmembrane segment at 233–256 (FGFERAAWYWHFVDVVWLFLYVSI) threads the bilayer. The Mitochondrial intermembrane segment spans residues 257–261 (YWWGS).

The protein belongs to the cytochrome c oxidase subunit 3 family. Component of the cytochrome c oxidase (complex IV, CIV), a multisubunit enzyme composed of 14 subunits. The complex is composed of a catalytic core of 3 subunits MT-CO1, MT-CO2 and MT-CO3, encoded in the mitochondrial DNA, and 11 supernumerary subunits COX4I, COX5A, COX5B, COX6A, COX6B, COX6C, COX7A, COX7B, COX7C, COX8 and NDUFA4, which are encoded in the nuclear genome. The complex exists as a monomer or a dimer and forms supercomplexes (SCs) in the inner mitochondrial membrane with NADH-ubiquinone oxidoreductase (complex I, CI) and ubiquinol-cytochrome c oxidoreductase (cytochrome b-c1 complex, complex III, CIII), resulting in different assemblies (supercomplex SCI(1)III(2)IV(1) and megacomplex MCI(2)III(2)IV(2)).

It is found in the mitochondrion inner membrane. It carries out the reaction 4 Fe(II)-[cytochrome c] + O2 + 8 H(+)(in) = 4 Fe(III)-[cytochrome c] + 2 H2O + 4 H(+)(out). In terms of biological role, component of the cytochrome c oxidase, the last enzyme in the mitochondrial electron transport chain which drives oxidative phosphorylation. The respiratory chain contains 3 multisubunit complexes succinate dehydrogenase (complex II, CII), ubiquinol-cytochrome c oxidoreductase (cytochrome b-c1 complex, complex III, CIII) and cytochrome c oxidase (complex IV, CIV), that cooperate to transfer electrons derived from NADH and succinate to molecular oxygen, creating an electrochemical gradient over the inner membrane that drives transmembrane transport and the ATP synthase. Cytochrome c oxidase is the component of the respiratory chain that catalyzes the reduction of oxygen to water. Electrons originating from reduced cytochrome c in the intermembrane space (IMS) are transferred via the dinuclear copper A center (CU(A)) of subunit 2 and heme A of subunit 1 to the active site in subunit 1, a binuclear center (BNC) formed by heme A3 and copper B (CU(B)). The BNC reduces molecular oxygen to 2 water molecules using 4 electrons from cytochrome c in the IMS and 4 protons from the mitochondrial matrix. The polypeptide is Cytochrome c oxidase subunit 3 (MT-CO3) (Squalus acanthias (Spiny dogfish)).